Consider the following 101-residue polypeptide: Small ribosomal subunit protein uS14 (101 aa).

Belongs to the universal ribosomal protein uS14 family. In terms of assembly, part of the 30S ribosomal subunit. Contacts proteins S3 and S10.

Its function is as follows. Binds 16S rRNA, required for the assembly of 30S particles and may also be responsible for determining the conformation of the 16S rRNA at the A site. The chain is Small ribosomal subunit protein uS14 from Histophilus somni (strain 2336) (Haemophilus somnus).